Here is a 456-residue protein sequence, read N- to C-terminus: MFLLLPFDSLIVNLLGISLTVLFTLLLVFIIVPAIFGVSFGIRKLYMKTLLKIFAWATLRMERGAKEKNHQLYKPYTNGIIAKDPTSLEEEIKEIRRSGSSKALDNTPEFELSDIFYFCRKGMETIMDDEVTKRFSAEELESWNLLSRTNYNFQYISLRLTVLWGLGVLIRYCFLLPLRIALAFTGISLLVVGTTVVGYLPNGRFKEFMSKHVHLMCYRICVRALTAIITYHDRENRPRNGGICVANHTSPIDVIILASDGYYAMVGQVHGGLMGVIQRAMVKACPHVWFERSEVKDRHLVAKRLTEHVQDKSKLPILIFPEGTCINNTSVMMFKKGSFEIGATVYPVAIKYDPQFGDAFWNSSKYGMVTYLLRMMTSWAIVCSVWYLPPMTREADEDAVQFANRVKSAIARQGGLVDLLWDGGLKREKVKDTFKEEQQKLYSKMIVGNHKDRSRS.

Residues 1–37 (MFLLLPFDSLIVNLLGISLTVLFTLLLVFIIVPAIFG) form the signal peptide. Transmembrane regions (helical) follow at residues 156 to 176 (ISLRLTVLWGLGVLIRYCFLL) and 180 to 200 (IALAFTGISLLVVGTTVVGYL). The N-linked (GlcNAc...) asparagine glycan is linked to Asn247. Positions 248–253 (HTSPID) match the HXXXXD motif motif. N-linked (GlcNAc...) asparagine glycans are attached at residues Asn327, Asn328, and Asn362.

The protein belongs to the 1-acyl-sn-glycerol-3-phosphate acyltransferase family.

It is found in the endoplasmic reticulum membrane. The catalysed reaction is sn-glycerol 3-phosphate + an acyl-CoA = a 1-acyl-sn-glycero-3-phosphate + CoA. The enzyme catalyses dodecanoyl-CoA + sn-glycerol 3-phosphate = 1-dodecanoyl-sn-glycerol 3-phosphate + CoA. It carries out the reaction sn-glycerol 3-phosphate + hexadecanoyl-CoA = 1-hexadecanoyl-sn-glycero-3-phosphate + CoA. It catalyses the reaction sn-glycerol 3-phosphate + octadecanoyl-CoA = 1-octadecanoyl-sn-glycero-3-phosphate + CoA. The catalysed reaction is sn-glycerol 3-phosphate + (9Z)-octadecenoyl-CoA = 1-(9Z-octadecenoyl)-sn-glycero-3-phosphate + CoA. The enzyme catalyses (9Z,12Z)-octadecadienoyl-CoA + sn-glycerol 3-phosphate = 1-(9Z,12Z)-octadecadienoyl-sn-glycero-3-phosphate + CoA. Its pathway is phospholipid metabolism; CDP-diacylglycerol biosynthesis; CDP-diacylglycerol from sn-glycerol 3-phosphate: step 1/3. In terms of biological role, converts glycerol-3-phosphate to 1-acyl-sn-glycerol-3-phosphate (lysophosphatidic acid or LPA) by incorporating an acyl moiety at the sn-1 position of the glycerol backbone. Active against both saturated and unsaturated long-chain fatty acyl-CoAs. Protects cells against lipotoxicity. This is Glycerol-3-phosphate acyltransferase 4 from Pongo abelii (Sumatran orangutan).